Consider the following 65-residue polypeptide: Large ribosomal subunit protein bL35 (65 aa).

This sequence belongs to the bacterial ribosomal protein bL35 family.

This chain is Large ribosomal subunit protein bL35, found in Yersinia pseudotuberculosis serotype O:1b (strain IP 31758).